We begin with the raw amino-acid sequence, 258 residues long: Phosphoribosylaminoimidazole-succinocarboxamide synthase (258 aa).

The protein belongs to the SAICAR synthetase family.

The catalysed reaction is 5-amino-1-(5-phospho-D-ribosyl)imidazole-4-carboxylate + L-aspartate + ATP = (2S)-2-[5-amino-1-(5-phospho-beta-D-ribosyl)imidazole-4-carboxamido]succinate + ADP + phosphate + 2 H(+). The protein operates within purine metabolism; IMP biosynthesis via de novo pathway; 5-amino-1-(5-phospho-D-ribosyl)imidazole-4-carboxamide from 5-amino-1-(5-phospho-D-ribosyl)imidazole-4-carboxylate: step 1/2. The protein is Phosphoribosylaminoimidazole-succinocarboxamide synthase of Rhizorhabdus wittichii (strain DSM 6014 / CCUG 31198 / JCM 15750 / NBRC 105917 / EY 4224 / RW1) (Sphingomonas wittichii).